The sequence spans 308 residues: Mannan endo-1,4-beta-mannosidase (308 aa).

The active-site Proton donor is Glu125. Glu220 functions as the Nucleophile in the catalytic mechanism. Residues 284 to 308 (DGLQETSKPSTVFTDDNGGHPEPPT) are disordered. Over residues 287-297 (QETSKPSTVFT) the composition is skewed to polar residues.

This sequence belongs to the glycosyl hydrolase 5 (cellulase A) family.

It catalyses the reaction Random hydrolysis of (1-&gt;4)-beta-D-mannosidic linkages in mannans, galactomannans and glucomannans.. Its function is as follows. Catalyzes the endo hydrolysis of beta-1,4-linked mannan, galactomannan and glucomannan. It is able to hydrolyze mannosidic linkages that are flanked by mannose or glucose. The chain is Mannan endo-1,4-beta-mannosidase from Salipaludibacillus agaradhaerens (Bacillus agaradhaerens).